We begin with the raw amino-acid sequence, 145 residues long: uncharacterized protein (145 aa).

Residues 1-22 (MLTRLVLSAHLSSTTSPPWTHA) form the signal peptide. Asn-98 carries N-linked (GlcNAc...) asparagine glycosylation. The segment at 103 to 145 (SSGQQRQAARQEEENSICKAHDSREGRLGYPLSAHQPGSGGPN) is disordered.

It is found in the secreted. This is an uncharacterized protein from Homo sapiens (Human).